The chain runs to 782 residues: Calcium-independent phospholipase A2-gamma (782 aa).

Asn-4 carries N-linked (GlcNAc...) asparagine glycosylation. 2 disordered regions span residues 219-275 and 317-343; these read EKMS…PSAI and SKSQSEEQEEPAKTDQAVSKDRNAEEK. A compositionally biased stretch (basic and acidic residues) spans 220-248; the sequence is KMSQQKENEHFRDKSELEDKKVEEGKLRS. Residue Asn-361 is glycosylated (N-linked (GlcNAc...) asparagine). The PNPLA domain occupies 445-640; the sequence is LSIDGGGTRG…LLNNPSALAM (196 aa). The short motif at 449–454 is the GXGXXG element; that stretch reads GGGTRG. A helical membrane pass occupies residues 475-495; sequence LFDYICGVSTGAILAFMLGLF. The GXSXG motif lies at 481 to 485; that stretch reads GVSTG. Ser-483 acts as the Nucleophile in catalysis. Asp-627 (proton acceptor) is an active-site residue. A DGA/G motif is present at residues 627-629; it reads DGG. Lys-736 bears the N6-succinyllysine mark.

As to expression, expressed in parenchymal tissues including heart, skeletal muscle, placenta, brain, liver and pancreas. Also expressed in bronchial epithelial cells and kidney. Highest expression is observed in skeletal muscle and heart.

It is found in the endoplasmic reticulum membrane. It localises to the mitochondrion membrane. The protein localises to the peroxisome membrane. It catalyses the reaction a 1,2-diacyl-sn-glycero-3-phosphocholine + H2O = a 1-acyl-sn-glycero-3-phosphocholine + a fatty acid + H(+). The enzyme catalyses a 1,2-diacyl-sn-glycero-3-phosphocholine + H2O = a 2-acyl-sn-glycero-3-phosphocholine + a fatty acid + H(+). The catalysed reaction is a 1,2-diacyl-sn-glycero-3-phosphoethanolamine + H2O = a 1-acyl-sn-glycero-3-phosphoethanolamine + a fatty acid + H(+). It carries out the reaction a 1-O-(1Z-alkenyl)-2-acyl-sn-glycero-3-phosphocholine + H2O = a 1-O-(1Z-alkenyl)-sn-glycero-3-phosphocholine + a fatty acid + H(+). It catalyses the reaction a 1-acyl-sn-glycero-3-phosphocholine + H2O = sn-glycerol 3-phosphocholine + a fatty acid + H(+). The enzyme catalyses 1-acyl-2-(9Z,12Z)-octadecadienoyl-sn-glycero-3-phosphocholine + H2O = a 1-acyl-sn-glycero-3-phosphocholine + (9Z,12Z)-octadecadienoate + H(+). The catalysed reaction is 1-acyl-2-(5Z,8Z,11Z,14Z-eicosatetraenoyl)-sn-glycero-3-phosphocholine + H2O = a 1-acyl-sn-glycero-3-phosphocholine + (5Z,8Z,11Z,14Z)-eicosatetraenoate + H(+). It carries out the reaction 1-hexadecanoyl-2-(5Z,8Z,11Z,14Z-eicosatetraenoyl)-sn-glycero-3-phosphocholine + H2O = 1-hexadecanoyl-sn-glycero-3-phosphocholine + (5Z,8Z,11Z,14Z)-eicosatetraenoate + H(+). It catalyses the reaction 1-octadecanoyl-2-(9Z-octadecenoyl)-sn-glycero-3-phosphocholine + H2O = 1-octadecanoyl-sn-glycero-3-phosphocholine + (9Z)-octadecenoate + H(+). The enzyme catalyses 1-hexadecanoyl-2-(9Z-octadecenoyl)-sn-glycero-3-phosphocholine + H2O = 1-hexadecanoyl-sn-glycero-3-phosphocholine + (9Z)-octadecenoate + H(+). The catalysed reaction is 1-hexadecanoyl-2-(9Z,12Z-octadecadienoyl)-sn-glycero-3-phosphocholine + H2O = (9Z,12Z)-octadecadienoate + 1-hexadecanoyl-sn-glycero-3-phosphocholine + H(+). It carries out the reaction 1-acyl-2-(9Z,12Z)-octadecadienoyl-sn-glycero-3-phosphoethanolamine + H2O = a 1-acyl-sn-glycero-3-phosphoethanolamine + (9Z,12Z)-octadecadienoate + H(+). It catalyses the reaction 1-acyl-2-(5Z,8Z,11Z,14Z)-eicosatetraenoyl-sn-glycero-3-phosphoethanolamine + H2O = a 1-acyl-sn-glycero-3-phosphoethanolamine + (5Z,8Z,11Z,14Z)-eicosatetraenoate + H(+). The enzyme catalyses 1-hexadecanoyl-2-(5Z,8Z,11Z,14Z-eicosatetraenoyl)-sn-glycero-3-phosphoethanolamine + H2O = 1-hexadecanoyl-sn-glycero-3-phosphoethanolamine + (5Z,8Z,11Z,14Z)-eicosatetraenoate + H(+). The catalysed reaction is 1-hexadecanoyl-2-(5Z,8Z,11Z,14Z-eicosatetraenoyl)-sn-glycero-3-phosphocholine + H2O = 2-(5Z,8Z,11Z,14Z)-eicosatetraenoyl-sn-glycero-3-phosphocholine + hexadecanoate + H(+). It carries out the reaction 1-octadecanoyl-2-(9Z-octadecenoyl)-sn-glycero-3-phosphocholine + H2O = 2-(9Z-octadecenoyl)-sn-glycero-3-phosphocholine + octadecanoate + H(+). It catalyses the reaction 1-hexadecanoyl-2-(4Z,7Z,10Z,13Z,16Z,19Z-docosahexaenoyl)-sn-glycero-3-phosphocholine + H2O = 2-(4Z,7Z,10Z,13Z,16Z,19Z-docosahexaenoyl)-sn-glycero-3-phosphocholine + hexadecanoate + H(+). The enzyme catalyses 1-O-(1Z)-hexadecenyl-2 (5Z,8Z,11Z,14Z)-eicosatetraenoyl-sn-glycero-3-phosphocholine + H2O = 1-(1Z-hexadecenyl)-sn-glycero-3-phosphocholine + (5Z,8Z,11Z,14Z)-eicosatetraenoate + H(+). The catalysed reaction is 1-O-(1Z-hexadecenyl)-2-(9Z-octadecenoyl)-sn-glycero-3-phosphocholine + H2O = 1-(1Z-hexadecenyl)-sn-glycero-3-phosphocholine + (9Z)-octadecenoate + H(+). It carries out the reaction 1-hexadecanoyl-sn-glycero-3-phosphocholine + H2O = sn-glycerol 3-phosphocholine + hexadecanoate + H(+). It catalyses the reaction 1',3'-bis-[1,2-di-(9Z,12Z-octadecadienoyl)-sn-glycero-3-phospho]-glycerol + H2O = 1'-[1,2-di-(9Z,12Z-octadecadienoyl)-sn-glycero-3-phospho]-3'-[1-(9Z,12Z-octadecadienoyl)-sn-glycero-3-phospho]-glycerol + (9Z,12Z)-octadecadienoate + H(+). The enzyme catalyses 1'-[1-acyl-2-(9-hydroxy-(10E,12Z)-octadecadienoyl)-sn-glycero-3-phospho]-3'-[1,2-diacyl-sn-glycero-3-phospho]-glycerol + H2O = 9-hydroxy-(10E,12Z)-octadecadienoate + 1'-[1,2-diacyl-sn-glycero-3-phospho],3'-[1-acyl-sn-glycero-3-phospho]-glycerol + H(+). It participates in phospholipid metabolism. With respect to regulation, calcium-independent phospholipase. Inhibited by (E)-6-bromomethylene-3-1-naphthalenyl-2H-tetrahydropyran-2-one (BEL). The activity toward 1-hexadecanoyl-2-(5Z,8Z,11Z,14Z-eicosatetraenoyl)-sn-glycero-3-phosphocholine is stimulated by cardiolipin. Functionally, calcium-independent and membrane-bound phospholipase, that catalyzes the esterolytic cleavage of fatty acids from glycerophospholipids to yield free fatty acids and lysophospholipids, hence regulating membrane physical properties and the release of lipid second messengers and growth factors. Hydrolyzes phosphatidylethanolamine, phosphatidylcholine and probably phosphatidylinositol with a possible preference for the former. Also has a broad substrate specificity in terms of fatty acid moieties, hydrolyzing saturated and mono-unsaturated fatty acids at nearly equal rates from either the sn-1 or sn-2 position in diacyl phosphatidylcholine. However, has a weak activity toward polyunsaturated fatty acids at the sn-2 position, and thereby favors the production of 2-arachidonoyl lysophosphatidylcholine, a key branch point metabolite in eicosanoid signaling. On the other hand, can produce arachidonic acid from the sn-1 position of diacyl phospholipid and from the sn-2 position of arachidonate-containing plasmalogen substrates. Therefore, plays an important role in the mobilization of arachidonic acid in response to cellular stimuli and the generation of lipid second messengers. Can also hydrolyze lysophosphatidylcholine. In the mitochondrial compartment, catalyzes the hydrolysis and release of oxidized aliphatic chains from cardiolipin and integrates mitochondrial bioenergetics and signaling. It is essential for maintaining efficient bioenergetic mitochondrial function through tailoring mitochondrial membrane lipid metabolism and composition. The polypeptide is Calcium-independent phospholipase A2-gamma (Homo sapiens (Human)).